A 478-amino-acid chain; its full sequence is MTRIKINARRIFSLLIPFFFFTSVHAEQTATPAKPVTVEAKNETFAPQHPDQYLSWKATSEQSERVDALAEDPRLVILWAGYPFSRDYNKPRGHAFAVTDVRETLRTGAPKNAEDGPLPMACWSCKSPDVARLIQKDGEDGYFHGKWARGGPEIVNNLGCADCHNTASPEFAKGKPELTLSRPYAARAMEAIGKPFEKAGRFDQQSMVCGQCHVEYYFDGKNKAVKFPWDDGMKVENMEQYYDKIAFSDWTNSLSKTPMLKAQHPEYETWTAGIHGKNNVTCIDCHMPKVQNAEGKLYTDHKIGNPFDNFAQTCANCHTQDKAALQKVVAERKQSINDLKIKVEDQLVHAHFEAKAALDAGATEAEMKPIQDDIRHAQWRWDLAIASHGIHMHAPEEGLRMLGTAMDKAADARTKLARLLATKGITHEIQIPDISTKEKAQQAIGLNMEQIKAEKQDFIKTVIPQWEEQERKNGLLSQ.

The N-terminal stretch at 1–26 (MTRIKINARRIFSLLIPFFFFTSVHA) is a signal peptide. His94 provides a ligand contact to heme c. Heme-binding residues include Cys122, Cys125, and Lys126. 6 residues coordinate heme c: Cys160, Cys163, His164, Cys209, Cys212, and His213. Ca(2+)-binding residues include Glu215, Tyr216, Lys261, and Gln263. Residue Tyr216 participates in substrate binding. Residue His264 participates in substrate binding. Residues His275, Cys282, Cys285, His286, His301, Cys314, Cys317, His318, and His393 each contribute to the heme c site.

This sequence belongs to the cytochrome c-552 family. Requires Ca(2+) as cofactor. Heme c is required as a cofactor.

It localises to the periplasm. It carries out the reaction 6 Fe(III)-[cytochrome c] + NH4(+) + 2 H2O = 6 Fe(II)-[cytochrome c] + nitrite + 8 H(+). Its pathway is nitrogen metabolism; nitrate reduction (assimilation). Functionally, catalyzes the reduction of nitrite to ammonia, consuming six electrons in the process. The polypeptide is Cytochrome c-552 (Escherichia coli O17:K52:H18 (strain UMN026 / ExPEC)).